A 235-amino-acid chain; its full sequence is Large ribosomal subunit protein uL1 (235 aa).

Belongs to the universal ribosomal protein uL1 family. As to quaternary structure, part of the 50S ribosomal subunit.

Its function is as follows. Binds directly to 23S rRNA. The L1 stalk is quite mobile in the ribosome, and is involved in E site tRNA release. Protein L1 is also a translational repressor protein, it controls the translation of the L11 operon by binding to its mRNA. The chain is Large ribosomal subunit protein uL1 from Thermobifida fusca (strain YX).